We begin with the raw amino-acid sequence, 94 residues long: Small ribosomal subunit protein uS19 (94 aa).

This sequence belongs to the universal ribosomal protein uS19 family.

Protein S19 forms a complex with S13 that binds strongly to the 16S ribosomal RNA. This Clostridium novyi (strain NT) protein is Small ribosomal subunit protein uS19.